Reading from the N-terminus, the 232-residue chain is Ribonuclease 3 (232 aa).

Residues 6 to 133 (LKEIEENLGV…IIAAVYLDKG (128 aa)) enclose the RNase III domain. E46 lines the Mg(2+) pocket. D50 is an active-site residue. Mg(2+) is bound by residues D119 and E122. E122 is an active-site residue. One can recognise a DRBM domain in the interval 160-229 (DFKTKLQELL…AKQALDILEG (70 aa)).

The protein belongs to the ribonuclease III family. In terms of assembly, homodimer. Requires Mg(2+) as cofactor.

The protein localises to the cytoplasm. It carries out the reaction Endonucleolytic cleavage to 5'-phosphomonoester.. In terms of biological role, digests double-stranded RNA. Involved in the processing of primary rRNA transcript to yield the immediate precursors to the large and small rRNAs (23S and 16S). Processes some mRNAs, and tRNAs when they are encoded in the rRNA operon. Processes pre-crRNA and tracrRNA of type II CRISPR loci if present in the organism. In Clostridium beijerinckii (strain ATCC 51743 / NCIMB 8052) (Clostridium acetobutylicum), this protein is Ribonuclease 3.